The primary structure comprises 506 residues: Lysine--tRNA ligase (506 aa).

2 residues coordinate Mg(2+): Glu416 and Glu423.

This sequence belongs to the class-II aminoacyl-tRNA synthetase family. As to quaternary structure, homodimer. Requires Mg(2+) as cofactor.

It localises to the cytoplasm. It catalyses the reaction tRNA(Lys) + L-lysine + ATP = L-lysyl-tRNA(Lys) + AMP + diphosphate. The chain is Lysine--tRNA ligase from Baumannia cicadellinicola subsp. Homalodisca coagulata.